The primary structure comprises 272 residues: Phosphoglycolate phosphatase (272 aa).

The active-site Nucleophile is the Asp-19. Residues Asp-19, Asp-21, and Asp-182 each contribute to the Mg(2+) site.

It belongs to the HAD-like hydrolase superfamily. CbbY/CbbZ/Gph/YieH family. Mg(2+) serves as cofactor.

The catalysed reaction is 2-phosphoglycolate + H2O = glycolate + phosphate. It participates in organic acid metabolism; glycolate biosynthesis; glycolate from 2-phosphoglycolate: step 1/1. Specifically catalyzes the dephosphorylation of 2-phosphoglycolate. Is involved in the dissimilation of the intracellular 2-phosphoglycolate formed during the DNA repair of 3'-phosphoglycolate ends, a major class of DNA lesions induced by oxidative stress. The sequence is that of Phosphoglycolate phosphatase from Pseudomonas fluorescens (strain Pf0-1).